Consider the following 429-residue polypeptide: Cell wall protein ECM33 (429 aa).

Positions 1–19 (MQFKNALTATAILSASALA) are cleaved as a signal peptide. Residues Asn-21, Asn-56, Asn-82, Asn-196, Asn-209, Asn-227, Asn-234, Asn-241, Asn-267, Asn-279, Asn-304, and Asn-328 are each glycosylated (N-linked (GlcNAc...) asparagine). Position 339 is a phosphoserine (Ser-339). Residues 361–401 (LSSTSTESSKSSATSSASSSGDASNAQANVSASASSSSSSS) show a composition bias toward low complexity. The disordered stretch occupies residues 361 to 410 (LSSTSTESSKSSATSSASSSGDASNAQANVSASASSSSSSSKKSKGAAPE). Residue Asn-389 is glycosylated (N-linked (GlcNAc...) asparagine). Gly-406 carries the GPI-anchor amidated glycine lipid modification. Positions 407–429 (AAPELVPATSFMGVVAAVAVALL) are cleaved as a propeptide — removed in mature form.

It belongs to the SPS2 family. The GPI-anchor is attached to the protein in the endoplasmic reticulum and serves to target the protein to the cell surface. There, the glucosamine-inositol phospholipid moiety is cleaved off and the GPI-modified mannoprotein is covalently attached via its lipidless GPI glycan remnant to the 1,6-beta-glucan of the outer cell wall layer.

Its subcellular location is the cell membrane. The protein resides in the secreted. It localises to the cell wall. Required for proper cell wall integrity and for the correct assembly of the mannoprotein outer layer of the cell wall. Important for apical bud growth. In Saccharomyces cerevisiae (strain AWRI1631) (Baker's yeast), this protein is Cell wall protein ECM33 (ECM33).